We begin with the raw amino-acid sequence, 621 residues long: TOX high mobility group box family member 4 (621 aa).

Disordered regions lie at residues 153–227 and 305–333; these read LGLS…QKPV and LDPA…ASIE. Position 176 is a phosphothreonine (T176). Phosphoserine is present on residues S178, S181, and S182. Positions 183–193 are enriched in basic and acidic residues; the sequence is LHEDGVEDFRR. Residues 208–218 are compositionally biased toward basic residues; the sequence is KQKAPKKRKKK. The short motif at 213–218 is the Nuclear localization signal element; the sequence is KKRKKK. Positions 223–291 form a DNA-binding region, HMG box; it reads PQKPVSAYAL…EYLKALAAYK (69 aa). Over residues 307–319 the composition is skewed to pro residues; sequence PAPPSQTPSPPPM. A Phosphothreonine modification is found at T313. The residue at position 315 (S315) is a Phosphoserine. Low complexity predominate over residues 320-333; the sequence is ATVDPASPAPASIE. Asymmetric dimethylarginine is present on R481. Polar residues predominate over residues 510 to 525; sequence PTVESSPERPMNNSPE. The disordered stretch occupies residues 510–529; that stretch reads PTVESSPERPMNNSPEAHTV. Phosphoserine occurs at positions 533, 550, 552, 560, 562, and 567.

In terms of assembly, component of the PNUTS-PP1 phosphatase complex, composed of PPP1R10/PNUTS, TOX4, WDR82 and PPP1CA or PPP1CB or PPP1CC. Interacts with PPP1R10/PNUTS. Interacts with FOXO1 and CREB1 (increased by cAMP); FOXO1 and CREB1 are required for full induction of TOX4-dependent activity and the interactions are inhibited by insulin. In terms of tissue distribution, expressed in liver (at protein level).

The protein resides in the nucleus. Its subcellular location is the chromosome. In liver, recruited to target gene promoters following treatment with dexamethasone and cAMP. Binding is decreased in presence of insulin. Transcription factor that modulates cell fate reprogramming from the somatic state to the pluripotent and neuronal fate. In liver, controls the expression of hormone-regulated gluconeogenic genes such as G6PC1 and PCK1. This regulation is independent of the insulin receptor activation. Also acts as a regulatory component of protein phosphatase 1 (PP1) complexes. Component of the PNUTS-PP1 protein phosphatase complex, a PP1 complex that regulates RNA polymerase II transcription pause-release. PNUTS-PP1 also plays a role in the control of chromatin structure and cell cycle progression during the transition from mitosis into interphase. This is TOX high mobility group box family member 4 from Homo sapiens (Human).